A 157-amino-acid chain; its full sequence is Protein Smg homolog (157 aa).

This sequence belongs to the Smg family.

This Shewanella halifaxensis (strain HAW-EB4) protein is Protein Smg homolog.